Consider the following 601-residue polypeptide: Oligoendopeptidase F, plasmid (601 aa).

Histidine 387 provides a ligand contact to Zn(2+). Residue glutamate 388 is part of the active site. Zn(2+) contacts are provided by histidine 391 and histidine 394.

The protein belongs to the peptidase M3B family. Zn(2+) serves as cofactor.

Hydrolyzes peptides containing between 7 and 17 amino acids with a rather wide specificity. The polypeptide is Oligoendopeptidase F, plasmid (pepF1) (Lactococcus lactis subsp. cremoris (Streptococcus cremoris)).